Consider the following 159-residue polypeptide: Kojic acid related protein 6 (159 aa).

Its function is as follows. Negatively regulates mycelium growth and conidial formation and is required for stress tolerance. Plays a role in kojic acid synthesis in coordination with kojA, kojR and kojT where it acts upstream of kojA. The protein is Kojic acid related protein 6 of Aspergillus oryzae (strain ATCC 42149 / RIB 40) (Yellow koji mold).